A 461-amino-acid chain; its full sequence is MDKKRHVHFIGIGGSGMNGIAAIMLGLGYRVTGSDLKPSAATRRLEALGATCYTRHAEENLGDADLVVASTAIPPDNIELVEARKRGLPVMHRADLLAWLMRRQKGIAVAGAHGKTTTTSMTALVLEKNGMDPTIVIGGELSEIGGNAKLGRGEYLVAEADESDGSFLKLDPVIEIITNIEDDHLDYYRSVENILAAFRRFMAKVPESGLAVACLDDPRLRELLAGYDRPCLTYALDNPEADYTMRNIRLMRQVTAGDVYYRGGFLGCLELSVPGRHNLSNAMAAVAVGRFVGLAFEGIAAALKDFRGAGRRFQLTGEVNGIKVIDDYAHHPSEIKATLKAAGQVKTGRVVGVFQPHRYTRTLFLGERFGEAFEDADVVIISDIYSAGEKPIEGVSAKTIVSAIEKHNGRKVIYLPTRQEIVDYLVQMARPGDMILTMGAGDIWSAGIELVKRLKENQKIG.

111 to 117 lines the ATP pocket; sequence GAHGKTT.

It belongs to the MurCDEF family.

Its subcellular location is the cytoplasm. It catalyses the reaction UDP-N-acetyl-alpha-D-muramate + L-alanine + ATP = UDP-N-acetyl-alpha-D-muramoyl-L-alanine + ADP + phosphate + H(+). It functions in the pathway cell wall biogenesis; peptidoglycan biosynthesis. In terms of biological role, cell wall formation. This Pelotomaculum thermopropionicum (strain DSM 13744 / JCM 10971 / SI) protein is UDP-N-acetylmuramate--L-alanine ligase.